Reading from the N-terminus, the 700-residue chain is Dipeptidyl aminopeptidase 1 (700 aa).

An N-terminal signal peptide occupies residues 1 to 27; it reads MAKRIFSVSFLLVLLNVLHICIKFSVA. Residues asparagine 52, asparagine 144, asparagine 265, asparagine 337, and asparagine 373 are each glycosylated (N-linked (GlcNAc...) asparagine). Residues 210–369 constitute a propeptide that is removed on maturation; sequence DNVNEIKHLD…SPKRELEINE (160 aa). Cystine bridges form between cysteine 395–cysteine 446 and cysteine 439–cysteine 478. Residue cysteine 398 is part of the active site. Threonine 416 carries the post-translational modification Sulfothreonine. Residues phenylalanine 450 and tyrosine 452 each contribute to the chloride site. 3 N-linked (GlcNAc...) asparagine glycosylation sites follow: asparagine 481, asparagine 490, and asparagine 507. Residue tyrosine 549 participates in chloride binding. The N-linked (GlcNAc...) asparagine glycan is linked to asparagine 615. Active-site residues include histidine 624 and asparagine 648. Asparagine 667 carries N-linked (GlcNAc...) asparagine glycosylation.

It belongs to the peptidase C1 family. Monomer. Chloride serves as cofactor.

It localises to the vacuole lumen. The protein resides in the parasitophorous vacuole lumen. The enzyme catalyses Release of an N-terminal dipeptide, Xaa-Yaa-|-Zaa-, except when Xaa is Arg or Lys, or Yaa or Zaa is Pro.. Thiol protease that cleaves dipeptides from the N-terminus of protein substrates. Active against a broad range of dipeptide substrates composed of both polar and hydrophobic amino acids. Proline cannot occupy the P1 position and arginine or lysine cannot occupy the P2 position of the substrate. Involved in host hemoglobin degradation by generating dipeptides from hemoglobin-derived oligopeptides. The sequence is that of Dipeptidyl aminopeptidase 1 from Plasmodium falciparum (isolate 3D7).